A 335-amino-acid polypeptide reads, in one-letter code: MQFERISTEQKKLSLIQTFLHQNALKLDEQIEYFVVGYNDNEQIVVCGGLAGNIIKCVAIDESLRGSGVALQLITELVDLAYTLKRPHLFIYTKPEYATLFKSCGFYIISDANPYVVLLENSATRLQKQCSLWEKMRVDGNRIGSIVMNANPFTLGHRYLIEQALQQCDHLHLFIVGEDASQFSYTERFEMIQQGIFDLSNITLHSGSDYIISRATFPNYFLKDQLITDESYFEIDLKLFRLHIAQALGITHRFVGTELNCPVTAEYNRQMHYWLMDAEMNAPKINVIEIPRKTASNHIISASTVRKHLAEKNWAQLAEFVPMTTLNYLQKCGRF.

Residues 1–131 enclose the N-acetyltransferase domain; sequence MQFERISTEQ…SATRLQKQCS (131 aa).

The enzyme catalyses holo-[citrate lyase ACP] + acetate + ATP = acetyl-[citrate lyase ACP] + AMP + diphosphate. Acetylation of prosthetic group (2-(5''-phosphoribosyl)-3'-dephosphocoenzyme-A) of the gamma subunit of citrate lyase. The sequence is that of [Citrate [pro-3S]-lyase] ligase (citC) from Haemophilus influenzae (strain ATCC 51907 / DSM 11121 / KW20 / Rd).